The following is a 1076-amino-acid chain: Regulator of G-protein signaling protein-like (1076 aa).

One can recognise an RGS domain in the interval 645–764 (NLTEVLLNTQ…LFPPHHQEVE (120 aa)). Over residues 834-852 (TTAHNTSGRSAPPSTNVRS) the composition is skewed to polar residues. Residues 834 to 854 (TTAHNTSGRSAPPSTNVRSAD) are disordered. A helical transmembrane segment spans residues 960 to 982 (VFHGAIMSVFPVVMYFWKRFCFW).

The protein localises to the membrane. The protein is Regulator of G-protein signaling protein-like (RGSL1) of Homo sapiens (Human).